Here is a 134-residue protein sequence, read N- to C-terminus: Small ribosomal subunit protein bS16 (134 aa).

Residues Ala-79 to Glu-134 form a disordered region. Residues Ala-115–Glu-134 show a composition bias toward low complexity.

The protein belongs to the bacterial ribosomal protein bS16 family.

The chain is Small ribosomal subunit protein bS16 from Brucella suis (strain ATCC 23445 / NCTC 10510).